A 142-amino-acid polypeptide reads, in one-letter code: 3-hydroxyacyl-[acyl-carrier-protein] dehydratase FabZ (142 aa).

The active site involves His-48.

The protein belongs to the thioester dehydratase family. FabZ subfamily.

The protein localises to the cytoplasm. The catalysed reaction is a (3R)-hydroxyacyl-[ACP] = a (2E)-enoyl-[ACP] + H2O. Involved in unsaturated fatty acids biosynthesis. Catalyzes the dehydration of short chain beta-hydroxyacyl-ACPs and long chain saturated and unsaturated beta-hydroxyacyl-ACPs. The protein is 3-hydroxyacyl-[acyl-carrier-protein] dehydratase FabZ of Natranaerobius thermophilus (strain ATCC BAA-1301 / DSM 18059 / JW/NM-WN-LF).